The following is a 501-amino-acid chain: Cytochrome P450 monooxygenase notH (501 aa).

A helical membrane pass occupies residues 11-31 (LGLESVGWVLGLLTTSILYLF). N298 is a glycosylation site (N-linked (GlcNAc...) asparagine). C442 lines the heme pocket.

The protein belongs to the cytochrome P450 family. Heme is required as a cofactor.

It localises to the membrane. It functions in the pathway alkaloid biosynthesis. Cytochrome P450 monooxygenase; part of the gene cluster that mediates the biosynthesis of notoamide, a fungal indole alkaloid that belongs to a family of natural products containing a characteristic bicyclo[2.2.2]diazaoctane core. The first step of notoamide biosynthesis involves coupling of L-proline and L-tryptophan by the bimodular NRPS notE, to produce cyclo-L-tryptophan-L-proline called brevianamide F. The reverse prenyltransferase notF then acts as a deoxybrevianamide E synthase and converts brevianamide F to deoxybrevianamide E via reverse prenylation at C-2 of the indole ring leading to the bicyclo[2.2.2]diazaoctane core. Deoxybrevianamide E is further hydroxylated at C-6 of the indole ring, likely catalyzed by the cytochrome P450 monooxygenase notG, to yield 6-hydroxy-deoxybrevianamide E. 6-hydroxy-deoxybrevianamide E is a specific substrate of the prenyltransferase notC for normal prenylation at C-7 to produce 6-hydroxy-7-prenyl-deoxybrevianamide, also called notoamide S. As the proposed pivotal branching point in notoamide biosynthesis, notoamide S can be diverted to notoamide E through an oxidative pyran ring closure putatively catalyzed by either notH cytochrome P450 monooxygenase or the notD FAD-linked oxidoreductase. This step would be followed by an indole 2,3-epoxidation-initiated pinacol-like rearrangement catalyzed by the notB FAD-dependent monooxygenase leading to the formation of notoamide C and notoamide D. On the other hand notoamide S is converted to notoamide T by notH (or notD), a bifunctional oxidase that also functions as the intramolecular Diels-Alderase responsible for generation of (+)-notoamide T. To generate antipodal (-)-notoaminide T, notH' (or notD') in Aspergillus versicolor is expected to catalyze a Diels-Alder reaction leading to the opposite stereochemistry. The remaining oxidoreductase notD (or notH) likely catalyzes the oxidative pyran ring formation to yield (+)-stephacidin A. The FAD-dependent monooxygenase notI is highly similar to notB and is predicted to catalyze a similar conversion from (+)-stephacidin A to (-)-notoamide B via the 2,3-epoxidation of (+)-stephacidin A followed by a pinacol-type rearrangement. Finally, it remains unclear which enzyme could be responsible for the final hydroxylation steps leading to notoamide A and sclerotiamide. This is Cytochrome P450 monooxygenase notH from Aspergillus sp. (strain MF297-2).